Here is a 180-residue protein sequence, read N- to C-terminus: PRA1 family protein F1 (180 aa).

4 consecutive transmembrane segments (helical) span residues 63–83, 84–104, 123–143, and 145–165; these read ANTV…VFLS, LIWN…WLFL, IVLI…DAKL, and IAVA…VRKT.

The protein belongs to the PRA1 family. In terms of assembly, interacts with PRA1F2. In terms of tissue distribution, expressed in hypocotyls, leaf bases and shoot apex.

The protein resides in the endosome membrane. May be involved in both secretory and endocytic intracellular trafficking in the endosomal/prevacuolar compartments. The polypeptide is PRA1 family protein F1 (PRA1F1) (Arabidopsis thaliana (Mouse-ear cress)).